We begin with the raw amino-acid sequence, 572 residues long: Proline--tRNA ligase (572 aa).

It belongs to the class-II aminoacyl-tRNA synthetase family. ProS type 1 subfamily. As to quaternary structure, homodimer.

It localises to the cytoplasm. It carries out the reaction tRNA(Pro) + L-proline + ATP = L-prolyl-tRNA(Pro) + AMP + diphosphate. Catalyzes the attachment of proline to tRNA(Pro) in a two-step reaction: proline is first activated by ATP to form Pro-AMP and then transferred to the acceptor end of tRNA(Pro). As ProRS can inadvertently accommodate and process non-cognate amino acids such as alanine and cysteine, to avoid such errors it has two additional distinct editing activities against alanine. One activity is designated as 'pretransfer' editing and involves the tRNA(Pro)-independent hydrolysis of activated Ala-AMP. The other activity is designated 'posttransfer' editing and involves deacylation of mischarged Ala-tRNA(Pro). The misacylated Cys-tRNA(Pro) is not edited by ProRS. The sequence is that of Proline--tRNA ligase from Buchnera aphidicola subsp. Acyrthosiphon pisum (strain 5A).